The sequence spans 669 residues: DNA mismatch repair protein MutL (669 aa).

Positions 361-409 are disordered; that stretch reads ENVFSQPYQAPVTSSTQKKSTGAYQGSAGKGLTDTQKSPQKTLDTRQFG. 2 stretches are compositionally biased toward polar residues: residues 363 to 384 and 393 to 402; these read VFSQ…TGAY and TDTQKSPQKT.

The protein belongs to the DNA mismatch repair MutL/HexB family.

This protein is involved in the repair of mismatches in DNA. It is required for dam-dependent methyl-directed DNA mismatch repair. May act as a 'molecular matchmaker', a protein that promotes the formation of a stable complex between two or more DNA-binding proteins in an ATP-dependent manner without itself being part of a final effector complex. The protein is DNA mismatch repair protein MutL of Proteus mirabilis (strain HI4320).